Here is a 189-residue protein sequence, read N- to C-terminus: dCTP deaminase, dUMP-forming (189 aa).

Residues 101–106, Asp-119, 127–129, Gln-148, Tyr-162, and Gln-174 contribute to the dCTP site; these read KSSLGR and TLE. The active-site Proton donor/acceptor is Glu-129.

This sequence belongs to the dCTP deaminase family. As to quaternary structure, homotrimer.

It carries out the reaction dCTP + 2 H2O = dUMP + NH4(+) + diphosphate. It functions in the pathway pyrimidine metabolism; dUMP biosynthesis; dUMP from dCTP: step 1/1. Its function is as follows. Bifunctional enzyme that catalyzes both the deamination of dCTP to dUTP and the hydrolysis of dUTP to dUMP without releasing the toxic dUTP intermediate. This Rhodococcus jostii (strain RHA1) protein is dCTP deaminase, dUMP-forming.